Reading from the N-terminus, the 727-residue chain is Translation initiation factor IF-2, mitochondrial (727 aa).

The transit peptide at 1–29 (MNQKLLKLENLLRFHTICRQVHSPSQRRL) directs the protein to the mitochondrion. In terms of domain architecture, tr-type G spans 178 to 346 (PRSPVVTVMG…ATIALAEILE (169 aa)). The segment at 187 to 194 (GHVDHGKT) is G1. 187–194 (GHVDHGKT) serves as a coordination point for GTP. Positions 212 to 216 (GITQH) are G2. GTP is bound by residues 234–237 (DTPG) and 288–291 (NKCD). A G3 region spans residues 234 to 237 (DTPG). A G4 region spans residues 288–291 (NKCD). The segment at 324–326 (SAL) is G5. A Phosphothreonine modification is found at Thr-688.

It belongs to the TRAFAC class translation factor GTPase superfamily. Classic translation factor GTPase family. IF-2 subfamily. In terms of assembly, monomer.

Its subcellular location is the mitochondrion. Functionally, one of the essential components for the initiation of protein synthesis. Protects formylmethionyl-tRNA from spontaneous hydrolysis and promotes its binding to the 30S ribosomal subunits. Also involved in the hydrolysis of GTP during the formation of the 70S ribosomal complex. This chain is Translation initiation factor IF-2, mitochondrial (Mtif2), found in Mus musculus (Mouse).